Here is a 217-residue protein sequence, read N- to C-terminus: Transcription antitermination protein NusB (217 aa).

It belongs to the NusB family.

In terms of biological role, involved in transcription antitermination. Required for transcription of ribosomal RNA (rRNA) genes. Binds specifically to the boxA antiterminator sequence of the ribosomal RNA (rrn) operons. This is Transcription antitermination protein NusB from Microcystis aeruginosa (strain NIES-843 / IAM M-2473).